Here is a 251-residue protein sequence, read N- to C-terminus: Triosephosphate isomerase (251 aa).

N9–K11 lines the substrate pocket. The active-site Electrophile is H95. The Proton acceptor role is filled by E167. Substrate contacts are provided by residues G173, S213, and G234–G235.

The protein belongs to the triosephosphate isomerase family. As to quaternary structure, homodimer.

Its subcellular location is the cytoplasm. It carries out the reaction D-glyceraldehyde 3-phosphate = dihydroxyacetone phosphate. The protein operates within carbohydrate biosynthesis; gluconeogenesis. It participates in carbohydrate degradation; glycolysis; D-glyceraldehyde 3-phosphate from glycerone phosphate: step 1/1. Involved in the gluconeogenesis. Catalyzes stereospecifically the conversion of dihydroxyacetone phosphate (DHAP) to D-glyceraldehyde-3-phosphate (G3P). In Fusobacterium nucleatum subsp. nucleatum (strain ATCC 25586 / DSM 15643 / BCRC 10681 / CIP 101130 / JCM 8532 / KCTC 2640 / LMG 13131 / VPI 4355), this protein is Triosephosphate isomerase.